The chain runs to 636 residues: MTYQTFFLISDPDNLDYPIYIVYDKSRVLDYFGDIFYTQSTTITEIELGDTNPDFKISILHNNNYLTSHVIKSTKYSLLDVNTVQMLLDYKDPDYELKSTCHLYIFYMTKNRFDICDYLIASNIKYIDSFGNISLLNSTNLNNYQLIKYIIDNNEFFNCRYYYLMLGILRYTKFYDLVDYILELISKSNNHIDYNSLLMELFSKFDCMGSLINSEIDAFQIKKLIDGNYFDEKVLFDTVICNNFELTKYLVEKGFNYDFDTIINSNVKFDVLKYFIELGNYLTDDHIYMILCNTSCEYYEKIIYLVDNNHITEKYFTKSIISRIIHFEFYLLDYLTNKLNIIELIDLDLLMKTSIRCNETVMVKKCIDYGINPDEYMEFAIKHDICIAKKLMELGGNIPDNMCIYNPDAYLTIESIDIILENNYDSLENLLPKIINNCDSEIIMYIIKKLTDTTIIIPHGLIKIFIRSYYWGRGNDIYSGIINSNLNFDDYQQIIIGIMRKEYNKIEQLIFSSTYYNSIELLFVVTLSENIELFKLLLEINCNDNNYLSWAFVFSIGCFKLMKYIVDNYNIDIYQRQFEVCIMSLQNYYRCYNQSDQIKFYLLLMGYEISCFNNKKNYNENIPLVKFMREMGVTLV.

11 ANK repeats span residues 63-97 (NNYL…DYEL), 99-129 (STCH…YIDS), 130-159 (FGNI…FFNC), 161-190 (YYYL…KSNN), 230-259 (FDEK…NYDF), 261-284 (TIIN…YLTD), 322-355 (SRII…KTSI), 372-400 (NPDE…NIPD), 425-455 (DSLE…DTTI), 517-546 (NSIE…NDNN), and 548-575 (LSWA…DIYQ).

The chain is Putative ankyrin repeat protein L766 from Acanthamoeba polyphaga mimivirus (APMV).